Here is a 443-residue protein sequence, read N- to C-terminus: RILP-like protein homolog (443 aa).

The RH1 domain occupies 8–96; sequence EMGEMVLDAI…ESEKLEKAEF (89 aa). The stretch at 59 to 315 forms a coiled coil; sequence LELLEALATK…TLNEQLAELK (257 aa). The RH2 domain maps to 282-401; it reads RPRYTTRELK…KSSESGIRKF (120 aa). The tract at residues 311-394 is disordered; sequence LAELKPPSQA…PDDAPWKKSS (84 aa). Over residues 332–355 the composition is skewed to acidic residues; it reads DDSDEDDDGHVADNDDDDDEEEAA. Low complexity predominate over residues 356 to 368; the sequence is AEANELEPPAAGE.

This sequence belongs to the RILPL family. Interacts with Arl8 (in GTP-bound form).

Its subcellular location is the lysosome membrane. In terms of biological role, may have a role in lysosome distribution by interacting with Arl8. The protein is RILP-like protein homolog of Drosophila melanogaster (Fruit fly).